The sequence spans 275 residues: T-cell ecto-ADP-ribosyltransferase 2 (275 aa).

Positions 1-20 (MPSNICKFFLTWWLIQQVTG) are cleaved as a signal peptide. Intrachain disulfides connect cysteine 41–cysteine 243 and cysteine 141–cysteine 193. The 178-residue stretch at 61 to 238 (AKLKVAWEEA…IFLDSPKRKK (178 aa)) folds into the TR mART core domain. Tyrosine 98, arginine 146, and glutamine 164 together coordinate NAD(+). Arginine 146 is a catalytic residue. Serine 167 is a catalytic residue. Serine 202 serves as a coordination point for NAD(+). Arginine 204 is modified (ADP-ribosylarginine; by autocatalysis). Glutamate 209 is an active-site residue. Serine 246 carries GPI-anchor amidated serine lipidation. Positions 247-275 (SAGARESCVSLFLVVLPSLLVQLLCLAEP) are cleaved as a propeptide — removed in mature form.

It belongs to the Arg-specific ADP-ribosyltransferase family. Postthymic T-cells.

Its subcellular location is the cell membrane. It carries out the reaction L-arginyl-[protein] + NAD(+) = N(omega)-(ADP-D-ribosyl)-L-arginyl-[protein] + nicotinamide + H(+). It catalyses the reaction NAD(+) + H2O = ADP-D-ribose + nicotinamide + H(+). Has both NAD(+) glycohydrolase and ADP-ribosyltransferase activity (to a lesser extent). In Rattus norvegicus (Rat), this protein is T-cell ecto-ADP-ribosyltransferase 2 (Art2b).